Consider the following 578-residue polypeptide: CTP synthase (578 aa).

One can recognise a Glutamine amidotransferase type-1 domain in the interval 305 to 559; that stretch reads KIALVGKYTN…LGLVAASSGI (255 aa). Active-site for GATase activity residues include Cys404, His535, and Glu537.

This sequence belongs to the CTP synthase family.

The catalysed reaction is UTP + L-glutamine + ATP + H2O = CTP + L-glutamate + ADP + phosphate + 2 H(+). It participates in pyrimidine metabolism; CTP biosynthesis via de novo pathway; CTP from UDP: step 2/2. Its function is as follows. Catalyzes the ATP-dependent amination of UTP to CTP with either L-glutamine or ammonia as the source of nitrogen. This Candida glabrata (strain ATCC 2001 / BCRC 20586 / JCM 3761 / NBRC 0622 / NRRL Y-65 / CBS 138) (Yeast) protein is CTP synthase (URA7).